Reading from the N-terminus, the 1373-residue chain is DNA-directed RNA polymerase subunit beta'' (1373 aa).

Zn(2+) is bound by residues cysteine 220, cysteine 293, cysteine 300, and cysteine 303.

Belongs to the RNA polymerase beta' chain family. RpoC2 subfamily. In terms of assembly, in plastids the minimal PEP RNA polymerase catalytic core is composed of four subunits: alpha, beta, beta', and beta''. When a (nuclear-encoded) sigma factor is associated with the core the holoenzyme is formed, which can initiate transcription. The cofactor is Zn(2+).

Its subcellular location is the plastid. It localises to the chloroplast. It catalyses the reaction RNA(n) + a ribonucleoside 5'-triphosphate = RNA(n+1) + diphosphate. Functionally, DNA-dependent RNA polymerase catalyzes the transcription of DNA into RNA using the four ribonucleoside triphosphates as substrates. This chain is DNA-directed RNA polymerase subunit beta'', found in Lepidium virginicum (Virginia pepperweed).